A 201-amino-acid chain; its full sequence is Lipoprotein signal peptidase (201 aa).

Helical transmembrane passes span 33 to 53 (LLLS…VLAV), 86 to 106 (GYTW…FWMG), and 110 to 130 (VSSW…GNLV). Catalysis depends on residues D146 and D160. The helical transmembrane segment at 158 to 178 (VADPSVVVGAILLVVLSIFGF) threads the bilayer.

Belongs to the peptidase A8 family.

Its subcellular location is the cell membrane. It catalyses the reaction Release of signal peptides from bacterial membrane prolipoproteins. Hydrolyzes -Xaa-Yaa-Zaa-|-(S,diacylglyceryl)Cys-, in which Xaa is hydrophobic (preferably Leu), and Yaa (Ala or Ser) and Zaa (Gly or Ala) have small, neutral side chains.. It participates in protein modification; lipoprotein biosynthesis (signal peptide cleavage). This protein specifically catalyzes the removal of signal peptides from prolipoproteins. This is Lipoprotein signal peptidase from Mycobacterium leprae (strain Br4923).